Reading from the N-terminus, the 66-residue chain is Large ribosomal subunit protein bL35 (66 aa).

Residues Met1–Arg16 are compositionally biased toward basic residues. The tract at residues Met1–Gly21 is disordered.

Belongs to the bacterial ribosomal protein bL35 family.

In Streptococcus gordonii (strain Challis / ATCC 35105 / BCRC 15272 / CH1 / DL1 / V288), this protein is Large ribosomal subunit protein bL35.